The sequence spans 335 residues: L-lactate dehydrogenase B chain (335 aa).

Residues 29 to 57 (GQVG…VEDK) and arginine 99 each bind NAD(+). The substrate site is built by arginine 106, asparagine 138, and arginine 169. Residue asparagine 138 coordinates NAD(+). Residue histidine 193 is the Proton acceptor of the active site. Threonine 248 is a binding site for substrate.

The protein belongs to the LDH/MDH superfamily. LDH family. As to quaternary structure, homotetramer.

It localises to the cytoplasm. The catalysed reaction is (S)-lactate + NAD(+) = pyruvate + NADH + H(+). It functions in the pathway fermentation; pyruvate fermentation to lactate; (S)-lactate from pyruvate: step 1/1. Functionally, interconverts simultaneously and stereospecifically pyruvate and lactate with concomitant interconversion of NADH and NAD(+). The protein is L-lactate dehydrogenase B chain (LDHB) of Sceloporus undulatus (Eastern fence lizard).